The following is a 395-amino-acid chain: Tyrosine--tRNA ligase 2 (395 aa).

The 'HIGH' region motif lies at P42–H51. Positions K226 to S230 match the 'KMSKS' region motif. K229 is an ATP binding site. The region spanning I334–I394 is the S4 RNA-binding domain.

Belongs to the class-I aminoacyl-tRNA synthetase family. TyrS type 2 subfamily. As to quaternary structure, homodimer.

The protein localises to the cytoplasm. It catalyses the reaction tRNA(Tyr) + L-tyrosine + ATP = L-tyrosyl-tRNA(Tyr) + AMP + diphosphate + H(+). Catalyzes the attachment of tyrosine to tRNA(Tyr) in a two-step reaction: tyrosine is first activated by ATP to form Tyr-AMP and then transferred to the acceptor end of tRNA(Tyr). This Vibrio cholerae serotype O1 (strain ATCC 39315 / El Tor Inaba N16961) protein is Tyrosine--tRNA ligase 2.